Here is a 74-residue protein sequence, read N- to C-terminus: Conotoxin AbVIA (74 aa).

The signal sequence occupies residues 1–17; it reads VLIIAVLFLTACQLTTA. Positions 18 to 38 are excised as a propeptide; it reads VTSSRGEQKHRALRSTDKKFK. 3 disulfides stabilise this stretch: Cys-43–Cys-57, Cys-50–Cys-61, and Cys-56–Cys-68. Serine amide is present on Ser-73.

This sequence belongs to the conotoxin O1 superfamily. As to expression, expressed by the venom duct.

The protein localises to the secreted. The protein is Conotoxin AbVIA of Conus abbreviatus (Abbreviated cone).